The following is a 166-amino-acid chain: Transcription factor HES-5 (166 aa).

Positions 16-72 constitute a bHLH domain; sequence KNRLRKPVVEKMRRDRINSSIEQLKLLLEQEFARHQPNSKLEKADILEMAVSYLKHS. One can recognise an Orange domain in the interval 88-119; sequence YSEGYSWCLQEAVQFLTLHAASDTQMKLLYHF. A disordered region spans residues 125–144; it reads APAAPAKEPKAPGAAPPPAL. The WRPW motif signature appears at 163–166; sequence WRPW.

As to quaternary structure, transcription repression requires formation of a complex with a corepressor protein of the Groucho/TLE family. As to expression, expressed in fetal heart and brain tumors.

It is found in the nucleus. Functionally, transcriptional repressor of genes that require a bHLH protein for their transcription. Plays an important role as neurogenesis negative regulator. This Homo sapiens (Human) protein is Transcription factor HES-5 (HES5).